The sequence spans 228 residues: Heat shock 70-related protein 4 (228 aa).

The segment at 57–80 (RWHEPPGNTVFDEAHDRPQVRRPD) is disordered. Over residues 68–80 (DEAHDRPQVRRPD) the composition is skewed to basic and acidic residues.

Belongs to the heat shock protein 70 family.

This chain is Heat shock 70-related protein 4 (HSP70.4), found in Leishmania major.